The following is a 660-amino-acid chain: Replication restart protein PriA (660 aa).

The region spanning 145-313 (IIGSEKTNVF…KNNQIKKIIM (169 aa)) is the Helicase ATP-binding domain. 158–165 (GIPGSGKT) provides a ligand contact to ATP. The DEAH box signature appears at 256 to 259 (DEEH). Zn(2+) is bound by residues Cys-370, Cys-373, Cys-379, Cys-382, Cys-397, Cys-400, Cys-410, and Cys-413. The region spanning 405–557 (KTASHCPQCE…QFYEEELDIR (153 aa)) is the Helicase C-terminal domain.

It belongs to the helicase family. PriA subfamily. Component of the replication restart primosome. Requires Zn(2+) as cofactor.

The catalysed reaction is Couples ATP hydrolysis with the unwinding of duplex DNA by translocating in the 3'-5' direction.. It catalyses the reaction ATP + H2O = ADP + phosphate + H(+). Initiates the restart of stalled replication forks, which reloads the replicative helicase on sites other than the origin of replication. Recognizes and binds to abandoned replication forks and remodels them to uncover a helicase loading site. Promotes assembly of the primosome at these replication forks. This Borreliella burgdorferi (strain ATCC 35210 / DSM 4680 / CIP 102532 / B31) (Borrelia burgdorferi) protein is Replication restart protein PriA.